The following is a 99-amino-acid chain: Plastocyanin (99 aa).

In terms of domain architecture, Plastocyanin-like spans 1 to 99 (IEVLLGGDDG…AGMVGKVTVN (99 aa)). Residues His-37, Cys-84, His-87, and Met-92 each contribute to the Cu cation site.

This sequence belongs to the plastocyanin family. Cu(2+) is required as a cofactor.

It localises to the plastid. The protein resides in the chloroplast thylakoid membrane. Functionally, participates in electron transfer between P700 and the cytochrome b6-f complex in photosystem I. This chain is Plastocyanin (PETE), found in Cucurbita pepo (Vegetable marrow).